Here is a 337-residue protein sequence, read N- to C-terminus: Inositol 2-dehydrogenase (337 aa).

The protein belongs to the Gfo/Idh/MocA family. In terms of assembly, homotetramer.

It catalyses the reaction myo-inositol + NAD(+) = scyllo-inosose + NADH + H(+). Its function is as follows. Involved in the oxidation of myo-inositol (MI) to 2-keto-myo-inositol (2KMI or 2-inosose). The polypeptide is Inositol 2-dehydrogenase (Gluconacetobacter diazotrophicus (strain ATCC 49037 / DSM 5601 / CCUG 37298 / CIP 103539 / LMG 7603 / PAl5)).